The chain runs to 398 residues: Probable peptidoglycan glycosyltransferase FtsW (398 aa).

At 1–25 (MCYGGTAMMAFADIKEALTPKPSAQ) the chain is on the cytoplasmic side. The helical transmembrane segment at 26–46 (LYDVPLLYCMLMLMGVGFVMV) threads the bilayer. At 47 to 69 (TSASMPTADRLFGNIYHFTIRHG) the chain is on the periplasmic side. A helical membrane pass occupies residues 70–90 (IFLALSFCLFWITTSVPMSWW). A topological domain (cytoplasmic) is located at residue lysine 91. Residues 92-112 (KANPYLLLVGLGLLLIVLIVG) traverse the membrane as a helical segment. Residues 113 to 120 (REVNGSTR) lie on the Periplasmic side of the membrane. A helical membrane pass occupies residues 121-141 (WIPIGPFNIQASELAKLFFFS). Residues 142 to 156 (YISGYLVRKRSEVQE) lie on the Cytoplasmic side of the membrane. The helical transmembrane segment at 157-177 (NIKGFIKPILVFAAYAGLILM) threads the bilayer. The Periplasmic segment spans residues 178–179 (QP). Residues 180–200 (DLGTVVVMFVTTVGLLFLAGA) form a helical membrane-spanning segment. Residue lysine 201 is a topological domain, cytoplasmic. The chain crosses the membrane as a helical span at residues 202–222 (LWQFFVLILTGVALVIGLIVL). Over 223 to 289 (EPYRMARVIG…DFIFAVIAEE (67 aa)) the chain is Periplasmic. Residues 290 to 312 (LGFVGVSSILIVLGTLVFRALLI) traverse the membrane as a helical segment. Residues 313 to 324 (GQNALKNGKEYE) are Cytoplasmic-facing. A helical transmembrane segment spans residues 325–345 (GYLALAIGIWFAFQTMVNVGA). The Periplasmic portion of the chain corresponds to 346–356 (SAGILPTKGLT). A helical transmembrane segment spans residues 357-377 (LPFISYGGSSLLMMTIAAGIL). Residues 378–398 (LRVDFETKMATKQATSGGAKR) are Cytoplasmic-facing.

The protein belongs to the SEDS family. FtsW subfamily.

The protein localises to the cell inner membrane. It catalyses the reaction [GlcNAc-(1-&gt;4)-Mur2Ac(oyl-L-Ala-gamma-D-Glu-L-Lys-D-Ala-D-Ala)](n)-di-trans,octa-cis-undecaprenyl diphosphate + beta-D-GlcNAc-(1-&gt;4)-Mur2Ac(oyl-L-Ala-gamma-D-Glu-L-Lys-D-Ala-D-Ala)-di-trans,octa-cis-undecaprenyl diphosphate = [GlcNAc-(1-&gt;4)-Mur2Ac(oyl-L-Ala-gamma-D-Glu-L-Lys-D-Ala-D-Ala)](n+1)-di-trans,octa-cis-undecaprenyl diphosphate + di-trans,octa-cis-undecaprenyl diphosphate + H(+). It participates in cell wall biogenesis; peptidoglycan biosynthesis. Functionally, peptidoglycan polymerase that is essential for cell division. This chain is Probable peptidoglycan glycosyltransferase FtsW, found in Pseudoalteromonas translucida (strain TAC 125).